A 701-amino-acid chain; its full sequence is Elongation factor G (701 aa).

One can recognise a tr-type G domain in the interval 8–286 (ERIRNIGIIA…AVVYYLPSPV (279 aa)). GTP contacts are provided by residues 17 to 24 (AHIDAGKT), 85 to 89 (DTPGH), and 139 to 142 (NKMD).

It belongs to the TRAFAC class translation factor GTPase superfamily. Classic translation factor GTPase family. EF-G/EF-2 subfamily.

It localises to the cytoplasm. Catalyzes the GTP-dependent ribosomal translocation step during translation elongation. During this step, the ribosome changes from the pre-translocational (PRE) to the post-translocational (POST) state as the newly formed A-site-bound peptidyl-tRNA and P-site-bound deacylated tRNA move to the P and E sites, respectively. Catalyzes the coordinated movement of the two tRNA molecules, the mRNA and conformational changes in the ribosome. This chain is Elongation factor G, found in Roseiflexus castenholzii (strain DSM 13941 / HLO8).